Consider the following 172-residue polypeptide: Putative phosphoesterase BCAH820_1309 (172 aa).

The active-site Proton donor is the His-34. 2 consecutive short sequence motifs (HXTX) follow at residues 34–37 (HITL) and 115–118 (HLTI). His-115 serves as the catalytic Proton acceptor.

Belongs to the 2H phosphoesterase superfamily. YjcG family.

This is Putative phosphoesterase BCAH820_1309 from Bacillus cereus (strain AH820).